Here is a 299-residue protein sequence, read N- to C-terminus: tRNA-cytidine(32) 2-sulfurtransferase (299 aa).

The short motif at 56-61 is the PP-loop motif element; it reads SGGKDS. [4Fe-4S] cluster is bound by residues Cys-131, Cys-134, and Cys-222.

This sequence belongs to the TtcA family. As to quaternary structure, homodimer. Mg(2+) serves as cofactor. The cofactor is [4Fe-4S] cluster.

The protein resides in the cytoplasm. The enzyme catalyses cytidine(32) in tRNA + S-sulfanyl-L-cysteinyl-[cysteine desulfurase] + AH2 + ATP = 2-thiocytidine(32) in tRNA + L-cysteinyl-[cysteine desulfurase] + A + AMP + diphosphate + H(+). It functions in the pathway tRNA modification. Catalyzes the ATP-dependent 2-thiolation of cytidine in position 32 of tRNA, to form 2-thiocytidine (s(2)C32). The sulfur atoms are provided by the cysteine/cysteine desulfurase (IscS) system. The sequence is that of tRNA-cytidine(32) 2-sulfurtransferase from Xylella fastidiosa (strain M12).